A 131-amino-acid polypeptide reads, in one-letter code: Dihydroneopterin aldolase 2 (131 aa).

Substrate-binding positions include E29, Y61, and 80-81; that span reads LE. The active-site Proton donor/acceptor is K107.

The protein belongs to the DHNA family. In terms of assembly, homooctamer. Forms a hollow cylinder assembled from two ring-shaped tetramers. Expressed in roots, leaves, stems and siliques.

It catalyses the reaction 7,8-dihydroneopterin = 6-hydroxymethyl-7,8-dihydropterin + glycolaldehyde. Its pathway is cofactor biosynthesis; tetrahydrofolate biosynthesis; 2-amino-4-hydroxy-6-hydroxymethyl-7,8-dihydropteridine diphosphate from 7,8-dihydroneopterin triphosphate: step 3/4. Its function is as follows. Catalyzes the conversion of 7,8-dihydroneopterin into 6-hydroxymethyl-7,8-dihydropterin, a biosynthetic precursor of the vitamin tetrahydrofolate. Can use L-threo-dihydroneopterin and D-erythro-dihydroneopterin as substrates for the formation of 6-hydroxymethyldihydropterin, but it can also catalyze the epimerization of carbon 2' of dihydroneopterin and dihydromonapterin. This Arabidopsis thaliana (Mouse-ear cress) protein is Dihydroneopterin aldolase 2.